Here is a 461-residue protein sequence, read N- to C-terminus: Carbamoyl phosphate synthase arginine-specific small chain (461 aa).

The 188-residue stretch at 240–427 (HVALIDCGVK…LENVQMYKDN (188 aa)) folds into the Glutamine amidotransferase type-1 domain. The active-site Nucleophile is the Cys316. Residues His400 and Glu402 contribute to the active site.

It belongs to the CarA family. As to quaternary structure, heterodimer composed of 2 chains; the small (or glutamine) chain promotes the hydrolysis of glutamine to ammonia, which is used by the large (or ammonia) chain to synthesize carbamoyl phosphate.

The protein resides in the cytoplasm. It catalyses the reaction hydrogencarbonate + L-glutamine + 2 ATP + H2O = carbamoyl phosphate + L-glutamate + 2 ADP + phosphate + 2 H(+). It carries out the reaction L-glutamine + H2O = L-glutamate + NH4(+). It functions in the pathway amino-acid biosynthesis; L-arginine biosynthesis; carbamoyl phosphate from bicarbonate: step 1/1. Functionally, small subunit of the arginine-specific carbamoyl phosphate synthase (CPSase). CPSase catalyzes the formation of carbamoyl phosphate from the ammonia moiety of glutamine, carbonate, and phosphate donated by ATP, constituting the first step of 2 biosynthetic pathways, one leading to arginine and/or urea and the other to pyrimidine nucleotides. The small subunit (glutamine amidotransferase) binds and cleaves glutamine to supply the large subunit with the substrate ammonia. The chain is Carbamoyl phosphate synthase arginine-specific small chain (CPA1) from Chaetomium globosum (strain ATCC 6205 / CBS 148.51 / DSM 1962 / NBRC 6347 / NRRL 1970) (Soil fungus).